A 155-amino-acid polypeptide reads, in one-letter code: Ribosome maturation factor RimP (155 aa).

It belongs to the RimP family.

It localises to the cytoplasm. Its function is as follows. Required for maturation of 30S ribosomal subunits. In Prochlorococcus marinus subsp. pastoris (strain CCMP1986 / NIES-2087 / MED4), this protein is Ribosome maturation factor RimP.